We begin with the raw amino-acid sequence, 708 residues long: Capsid scaffolding protein (708 aa).

Catalysis depends on charge relay system residues His63, Ser132, and His157. Disordered stretches follow at residues 270–339 (SAER…MSHP), 455–565 (HPSY…QQQR), and 593–620 (ALPS…GGGE). Residues 284–293 (PAAGARVPSS) show a composition bias toward low complexity. The span at 294–311 (SPSPPVEPPSPVQPPALP) shows a compositional bias: pro residues. A compositionally biased stretch (low complexity) spans 326-339 (SPSEPAEAASMSHP). Residues 333–352 (AASMSHPLSAAVPAATAPPG) form an interaction with pAP region. Residues 498–513 (KQHRHGGSGGHNKRRK) are compositionally biased toward basic residues. Short sequence motifs (nuclear localization signal) lie at residues 510–515 (KRRKET) and 537–543 (RARKRLK). A compositionally biased stretch (low complexity) spans 593–615 (ALPSAASSSPTTTTVCTPTSELT). Residues 688–708 (PPKDMVDLNRRIFVAALNKLE) are interaction with major capsid protein.

The protein belongs to the herpesviridae capsid scaffolding protein family. As to quaternary structure, homomultimer. Interacts with major capsid protein. In terms of assembly, exists in a monomer-dimer equilibrium with the dimer being the active species. Post-translationally, capsid scaffolding protein is cleaved by assemblin after formation of the spherical procapsid. As a result, the capsid obtains its mature, icosahedral shape. Cleavages occur at two or more sites: release (R-site) and maturation (M-site).

Its subcellular location is the host cytoplasm. It is found in the host nucleus. It carries out the reaction Cleaves -Ala-|-Ser- and -Ala-|-Ala- bonds in the scaffold protein.. Acts as a scaffold protein by binding major capsid protein in the cytoplasm, inducing the nuclear localization of both proteins. Multimerizes in the nucleus such as major capsid protein forms the icosahedral T=16 capsid. Autocatalytic cleavage releases the assembly protein, and subsequently abolishes interaction with major capsid protein. Cleavages products are evicted from the capsid before or during DNA packaging. Its function is as follows. Protease that plays an essential role in virion assembly within the nucleus. Catalyzes the cleavage of the assembly protein after formation of the spherical procapsid. By that cleavage, the capsid matures and gains its icosahedral shape. The cleavage sites seem to include -Ala-Ser-, -Ala-Ala-, as well as Ala-Thr bonds. Assemblin and cleavages products are evicted from the capsid before or during DNA packaging. In terms of biological role, plays a major role in capsid assembly. Acts as a scaffold protein by binding major capsid protein. Multimerizes in the nucleus such as major capsid protein forms the icosahedral T=16 capsid. Cleaved by assemblin after capsid completion. The cleavages products are evicted from the capsid before or during DNA packaging. The protein is Capsid scaffolding protein (UL80) of Homo sapiens (Human).